The primary structure comprises 181 residues: Small ribosomal subunit protein uS4 (181 aa).

In terms of domain architecture, S4 RNA-binding spans 104 to 172 (RRLQTIVYKK…SRPPVMSQQE (69 aa)).

The protein belongs to the universal ribosomal protein uS4 family. In terms of assembly, part of the 30S ribosomal subunit. Contacts protein S5. The interaction surface between S4 and S5 is involved in control of translational fidelity.

Its function is as follows. One of the primary rRNA binding proteins, it binds directly to 16S rRNA where it nucleates assembly of the body of the 30S subunit. In terms of biological role, with S5 and S12 plays an important role in translational accuracy. The protein is Small ribosomal subunit protein uS4 of Saccharolobus solfataricus (strain ATCC 35092 / DSM 1617 / JCM 11322 / P2) (Sulfolobus solfataricus).